Reading from the N-terminus, the 255-residue chain is Enolase-phosphatase E1 (255 aa).

Residues D22 and E24 each coordinate Mg(2+). Residues 136 to 137 (SS) and K173 contribute to the substrate site. D199 provides a ligand contact to Mg(2+).

This sequence belongs to the HAD-like hydrolase superfamily. MasA/MtnC family. Monomer. The cofactor is Mg(2+).

The protein resides in the cytoplasm. It is found in the nucleus. The catalysed reaction is 5-methylsulfanyl-2,3-dioxopentyl phosphate + H2O = 1,2-dihydroxy-5-(methylsulfanyl)pent-1-en-3-one + phosphate. It participates in amino-acid biosynthesis; L-methionine biosynthesis via salvage pathway; L-methionine from S-methyl-5-thio-alpha-D-ribose 1-phosphate: step 3/6. The protein operates within amino-acid biosynthesis; L-methionine biosynthesis via salvage pathway; L-methionine from S-methyl-5-thio-alpha-D-ribose 1-phosphate: step 4/6. In terms of biological role, bifunctional enzyme that catalyzes the enolization of 2,3-diketo-5-methylthiopentyl-1-phosphate (DK-MTP-1-P) into the intermediate 2-hydroxy-3-keto-5-methylthiopentenyl-1-phosphate (HK-MTPenyl-1-P), which is then dephosphorylated to form the acireductone 1,2-dihydroxy-3-keto-5-methylthiopentene (DHK-MTPene). The protein is Enolase-phosphatase E1 of Verticillium alfalfae (strain VaMs.102 / ATCC MYA-4576 / FGSC 10136) (Verticillium wilt of alfalfa).